The chain runs to 247 residues: 5-oxoprolinase subunit A (247 aa).

It belongs to the LamB/PxpA family. In terms of assembly, forms a complex composed of PxpA, PxpB and PxpC.

The catalysed reaction is 5-oxo-L-proline + ATP + 2 H2O = L-glutamate + ADP + phosphate + H(+). Functionally, catalyzes the cleavage of 5-oxoproline to form L-glutamate coupled to the hydrolysis of ATP to ADP and inorganic phosphate. This Vibrio vulnificus (strain YJ016) protein is 5-oxoprolinase subunit A.